Consider the following 255-residue polypeptide: Imidazole glycerol phosphate synthase subunit HisF (255 aa).

Active-site residues include D12 and D131.

It belongs to the HisA/HisF family. In terms of assembly, heterodimer of HisH and HisF.

Its subcellular location is the cytoplasm. It carries out the reaction 5-[(5-phospho-1-deoxy-D-ribulos-1-ylimino)methylamino]-1-(5-phospho-beta-D-ribosyl)imidazole-4-carboxamide + L-glutamine = D-erythro-1-(imidazol-4-yl)glycerol 3-phosphate + 5-amino-1-(5-phospho-beta-D-ribosyl)imidazole-4-carboxamide + L-glutamate + H(+). It functions in the pathway amino-acid biosynthesis; L-histidine biosynthesis; L-histidine from 5-phospho-alpha-D-ribose 1-diphosphate: step 5/9. IGPS catalyzes the conversion of PRFAR and glutamine to IGP, AICAR and glutamate. The HisF subunit catalyzes the cyclization activity that produces IGP and AICAR from PRFAR using the ammonia provided by the HisH subunit. The polypeptide is Imidazole glycerol phosphate synthase subunit HisF (Zymomonas mobilis subsp. mobilis (strain ATCC 31821 / ZM4 / CP4)).